The sequence spans 252 residues: ATP synthase subunit a (252 aa).

6 helical membrane passes run Phe-29 to Ile-49, Phe-87 to Phe-107, Ile-117 to Tyr-137, Leu-146 to Ile-166, Phe-196 to Ile-216, and Val-219 to Leu-239.

The protein belongs to the ATPase A chain family. In terms of assembly, F-type ATPases have 2 components, CF(1) - the catalytic core - and CF(0) - the membrane proton channel. CF(1) has five subunits: alpha(3), beta(3), gamma(1), delta(1), epsilon(1). CF(0) has three main subunits: a(1), b(2) and c(9-12). The alpha and beta chains form an alternating ring which encloses part of the gamma chain. CF(1) is attached to CF(0) by a central stalk formed by the gamma and epsilon chains, while a peripheral stalk is formed by the delta and b chains.

Its subcellular location is the cell inner membrane. In terms of biological role, key component of the proton channel; it plays a direct role in the translocation of protons across the membrane. This chain is ATP synthase subunit a, found in Bartonella henselae (strain ATCC 49882 / DSM 28221 / CCUG 30454 / Houston 1) (Rochalimaea henselae).